The chain runs to 482 residues: Putative alpha-L-fucosidase (482 aa).

A signal peptide spans 1–16 (MIFLIFSILFLHLANC). N-linked (GlcNAc...) asparagine glycans are attached at residues N182, N343, N359, and N419.

It belongs to the glycosyl hydrolase 29 family.

The enzyme catalyses an alpha-L-fucoside + H2O = L-fucose + an alcohol. In terms of biological role, alpha-L-fucosidase is responsible for hydrolyzing the alpha-1,6-linked fucose joined to the reducing-end N-acetylglucosamine of the carbohydrate moieties of glycoproteins. This chain is Putative alpha-L-fucosidase, found in Caenorhabditis elegans.